The primary structure comprises 155 residues: 1,4-dihydroxy-2-naphthoyl-CoA hydrolase (155 aa).

Aspartate 27 is a catalytic residue.

The protein belongs to the 4-hydroxybenzoyl-CoA thioesterase family. DHNA-CoA hydrolase subfamily.

It catalyses the reaction 1,4-dihydroxy-2-naphthoyl-CoA + H2O = 1,4-dihydroxy-2-naphthoate + CoA + H(+). The protein operates within cofactor biosynthesis; phylloquinone biosynthesis. It participates in quinol/quinone metabolism; 1,4-dihydroxy-2-naphthoate biosynthesis; 1,4-dihydroxy-2-naphthoate from chorismate: step 7/7. Catalyzes the hydrolysis of 1,4-dihydroxy-2-naphthoyl-CoA (DHNA-CoA) to 1,4-dihydroxy-2-naphthoate (DHNA), a reaction involved in phylloquinone (vitamin K1) biosynthesis. This is 1,4-dihydroxy-2-naphthoyl-CoA hydrolase from Prochlorococcus marinus (strain NATL2A).